A 168-amino-acid chain; its full sequence is Photosystem I assembly protein Ycf3 (168 aa).

3 TPR repeats span residues 35 to 68, 72 to 105, and 120 to 153; these read AFTY…EIDP, SYIL…NPFL, and GEQA…TPGN.

Belongs to the Ycf3 family.

The protein localises to the plastid membrane. In terms of biological role, essential for the assembly of the photosystem I (PSI) complex. May act as a chaperone-like factor to guide the assembly of the PSI subunits. In Cuscuta reflexa (Southern Asian dodder), this protein is Photosystem I assembly protein Ycf3.